Here is a 329-residue protein sequence, read N- to C-terminus: UDP-3-O-acylglucosamine N-acyltransferase (329 aa).

The Proton acceptor role is filled by histidine 224.

It belongs to the transferase hexapeptide repeat family. LpxD subfamily. In terms of assembly, homotrimer.

The catalysed reaction is a UDP-3-O-[(3R)-3-hydroxyacyl]-alpha-D-glucosamine + a (3R)-hydroxyacyl-[ACP] = a UDP-2-N,3-O-bis[(3R)-3-hydroxyacyl]-alpha-D-glucosamine + holo-[ACP] + H(+). Its pathway is bacterial outer membrane biogenesis; LPS lipid A biosynthesis. In terms of biological role, catalyzes the N-acylation of UDP-3-O-acylglucosamine using 3-hydroxyacyl-ACP as the acyl donor. Is involved in the biosynthesis of lipid A, a phosphorylated glycolipid that anchors the lipopolysaccharide to the outer membrane of the cell. The polypeptide is UDP-3-O-acylglucosamine N-acyltransferase (Albidiferax ferrireducens (strain ATCC BAA-621 / DSM 15236 / T118) (Rhodoferax ferrireducens)).